We begin with the raw amino-acid sequence, 231 residues long: PIAGSMVLAAILLKLGGYGIIRMMQILPTTKTDMFLPFIVLALWGAILANLTCLQQTDLKSLIAYSSISHMGLVVAAIIIQTPWGLSGAMALMIAHGFTSSALFCLANTTYERTHTRILILTRGLHNILPMATTWWLLTNLMNIAIPPTMNFTGELLIMSALFNWCPTTIIMLGLSMLITASYSLHMFLSTQMGPTPLNNQTEPTHSREHLLMILHLIPLMMISMKPELII.

The next 7 helical transmembrane spans lie at 1–21 (PIAGSMVLAAILLKLGGYGII), 34–54 (MFLPFIVLALWGAILANLTCL), 63–85 (IAYSSISHMGLVVAAIIIQTPWG), 89–111 (AMALMIAHGFTSSALFCLANTTY), 128–148 (ILPMATTWWLLTNLMNIAIPP), 156–176 (LLIMSALFNWCPTTIIMLGLS), and 211–231 (LLMILHLIPLMMISMKPELII).

Belongs to the complex I subunit 4 family.

It localises to the mitochondrion membrane. The catalysed reaction is a ubiquinone + NADH + 5 H(+)(in) = a ubiquinol + NAD(+) + 4 H(+)(out). Core subunit of the mitochondrial membrane respiratory chain NADH dehydrogenase (Complex I) that is believed to belong to the minimal assembly required for catalysis. Complex I functions in the transfer of electrons from NADH to the respiratory chain. The immediate electron acceptor for the enzyme is believed to be ubiquinone. This chain is NADH-ubiquinone oxidoreductase chain 4 (MT-ND4), found in Agkistrodon piscivorus piscivorus (Eastern cottonmouth).